We begin with the raw amino-acid sequence, 71 residues long: Sec-independent protein translocase protein TatA (71 aa).

Residues 1-21 (MGSFSLLHWLVVLVIVLLVFG) traverse the membrane as a helical segment. Residues 43–71 (LREDDKPTDQLGSTSQSTASGPQQDHGKH) form a disordered region. Polar residues predominate over residues 52-65 (QLGSTSQSTASGPQ).

This sequence belongs to the TatA/E family. The Tat system comprises two distinct complexes: a TatABC complex, containing multiple copies of TatA, TatB and TatC subunits, and a separate TatA complex, containing only TatA subunits. Substrates initially bind to the TatABC complex, which probably triggers association of the separate TatA complex to form the active translocon.

Its subcellular location is the cell inner membrane. Its function is as follows. Part of the twin-arginine translocation (Tat) system that transports large folded proteins containing a characteristic twin-arginine motif in their signal peptide across membranes. TatA could form the protein-conducting channel of the Tat system. The sequence is that of Sec-independent protein translocase protein TatA from Xylella fastidiosa (strain 9a5c).